The primary structure comprises 777 residues: Polyribonucleotide nucleotidyltransferase (777 aa).

2 residues coordinate Mg(2+): Asp494 and Asp500. In terms of domain architecture, KH spans 561 to 620 (PRIITLQIDPSKIGALIGPGGKTIRSIIEQTGAQIDVEDDGRVFVTTPDADGARMAQSLI). The S1 motif domain occupies 630–699 (GEIFTGKVVR…GTGKLSLSRR (70 aa)). The tract at residues 703 to 777 (TGETAEQRKS…NDRRGGGFRG (75 aa)) is disordered. A compositionally biased stretch (gly residues) spans 718–727 (GPRGGGGGGD). Composition is skewed to basic and acidic residues over residues 728-761 (RGPR…DRGP) and 768-777 (NDRRGGGFRG).

The protein belongs to the polyribonucleotide nucleotidyltransferase family. Requires Mg(2+) as cofactor.

The protein resides in the cytoplasm. It catalyses the reaction RNA(n+1) + phosphate = RNA(n) + a ribonucleoside 5'-diphosphate. Its function is as follows. Involved in mRNA degradation. Catalyzes the phosphorolysis of single-stranded polyribonucleotides processively in the 3'- to 5'-direction. The sequence is that of Polyribonucleotide nucleotidyltransferase from Herpetosiphon aurantiacus (strain ATCC 23779 / DSM 785 / 114-95).